The sequence spans 392 residues: Alaserpin (392 aa).

Residues 1–16 (MKIIMCIFGLAALAMA) form the signal peptide. A glycan (N-linked (GlcNAc...) asparagine) is linked at Asn-85.

Belongs to the serpin family. Hemolymph.

The protein resides in the secreted. Its subcellular location is the extracellular space. In terms of biological role, inhibits elastase. This Manduca sexta (Tobacco hawkmoth) protein is Alaserpin.